Consider the following 168-residue polypeptide: Group IIF secretory phospholipase A2 (168 aa).

The first 20 residues, 1 to 20 (MKKFFAIAVLAGSVVTTAHS), serve as a signal peptide directing secretion. Intrachain disulfides connect cysteine 46-cysteine 138, cysteine 48-cysteine 64, cysteine 63-cysteine 120, cysteine 69-cysteine 145, cysteine 70-cysteine 113, cysteine 79-cysteine 106, and cysteine 98-cysteine 111. Tyrosine 47, glycine 49, and glycine 51 together coordinate Ca(2+). Histidine 67 is an active-site residue. Aspartate 68 contributes to the Ca(2+) binding site. 2 N-linked (GlcNAc...) asparagine glycosylation sites follow: asparagine 92 and asparagine 102. Residue aspartate 114 is part of the active site. Positions 139–168 (QGPTPNCSIYDPYPEEVTCGHGLPATPVST) are required for localization on the plasma membrane. N-linked (GlcNAc...) asparagine glycosylation is present at asparagine 144.

It belongs to the phospholipase A2 family. Ca(2+) is required as a cofactor. As to expression, strongly expressed in testis.

The protein resides in the secreted. Its subcellular location is the cell membrane. It catalyses the reaction a 1,2-diacyl-sn-glycero-3-phosphocholine + H2O = a 1-acyl-sn-glycero-3-phosphocholine + a fatty acid + H(+). The catalysed reaction is 1-hexadecanoyl-2-(9Z-octadecenoyl)-sn-glycero-3-phospho-(1'-sn-glycerol) + H2O = 1-hexadecanoyl-sn-glycero-3-phospho-(1'-sn-glycerol) + (9Z)-octadecenoate + H(+). It carries out the reaction 1-hexadecanoyl-2-(9Z,12Z-octadecadienoyl)-sn-glycero-3-phosphoethanolamine + H2O = 1-hexadecanoyl-sn-glycero-3-phosphoethanolamine + (9Z,12Z)-octadecadienoate + H(+). The enzyme catalyses 1-hexadecanoyl-2-(5Z,8Z,11Z,14Z-eicosatetraenoyl)-sn-glycero-3-phosphoethanolamine + H2O = 1-hexadecanoyl-sn-glycero-3-phosphoethanolamine + (5Z,8Z,11Z,14Z)-eicosatetraenoate + H(+). It catalyses the reaction 1-hexadecanoyl-2-(9Z-octadecenoyl)-sn-glycero-3-phosphocholine + H2O = 1-hexadecanoyl-sn-glycero-3-phosphocholine + (9Z)-octadecenoate + H(+). The catalysed reaction is 1-hexadecanoyl-2-(9Z-octadecenoyl)-sn-glycero-3-phospho-L-serine + H2O = 1-hexadecanoyl-sn-glycero-3-phospho-L-serine + (9Z)-octadecenoate + H(+). Secretory calcium-dependent phospholipase A2 that primarily targets extracellular phospholipids. Hydrolyzes the ester bond of the fatty acyl group attached at the sn-2 position of phospholipids (phospholipase A2 activity), the catalytic efficiency decreasing in the following order: phosphatidylglycerols &gt; phosphatidylethanolamines &gt; phosphatidylcholines &gt; phosphatidylserines. May play a role in lipid mediator production in inflammatory conditions, by providing arachidonic acid to downstream cyclooxygenases and lipoxygenases. This is Group IIF secretory phospholipase A2 (Pla2g2f) from Mus musculus (Mouse).